Reading from the N-terminus, the 206-residue chain is Large ribosomal subunit protein uL4 (206 aa).

Residues 44-87 (KRQGTHATKTRGMKRGGGAKPWRQKGTGRARAGSTRSPLWRGGG) form a disordered region.

This sequence belongs to the universal ribosomal protein uL4 family. Part of the 50S ribosomal subunit.

In terms of biological role, one of the primary rRNA binding proteins, this protein initially binds near the 5'-end of the 23S rRNA. It is important during the early stages of 50S assembly. It makes multiple contacts with different domains of the 23S rRNA in the assembled 50S subunit and ribosome. Forms part of the polypeptide exit tunnel. This Maridesulfovibrio salexigens (strain ATCC 14822 / DSM 2638 / NCIMB 8403 / VKM B-1763) (Desulfovibrio salexigens) protein is Large ribosomal subunit protein uL4.